A 702-amino-acid chain; its full sequence is Dissimilatory sulfite reductase MccA (702 aa).

The first 39 residues, Met-1–Ala-39, serve as a signal peptide directing secretion. Heme c contacts are provided by Cys-155, Cys-158, His-159, and His-171. Substrate is bound by residues Lys-220 and Tyr-297. Residues Cys-314, Cys-317, His-318, Cys-351, Cys-354, His-355, His-360, Cys-372, Cys-375, and His-376 each coordinate heme c. Arg-378 contributes to the substrate binding site. Cys-411 provides a ligand contact to Cu(+). His-423, Cys-430, Cys-433, His-434, His-437, Cys-474, Cys-477, His-478, His-491, Cys-496, Cys-499, and His-500 together coordinate heme c. Residue Cys-507 participates in Cu(+) binding. 5 residues coordinate heme c: His-528, Cys-574, Cys-590, His-591, and His-675.

The protein belongs to the multiheme cytochrome c family. As to quaternary structure, homotrimer. Cu(+) serves as cofactor. Requires heme c as cofactor.

It localises to the periplasm. It catalyses the reaction [protein]-disulfide + hydrogen sulfide + 2 A + 3 H2O = [protein]-dithiol + sulfite + 2 AH2 + H(+). Its pathway is sulfur metabolism; sulfite reduction. In terms of biological role, respiratory sulfite reductase that catalyzes the reduction of sulfite to sulfide in a single step, consuming six electrons in the process. Required for sulfite respiration under anaerobic growth conditions. Has only marginal activity with nitrite. This Wolinella succinogenes (strain ATCC 29543 / DSM 1740 / CCUG 13145 / JCM 31913 / LMG 7466 / NCTC 11488 / FDC 602W) (Vibrio succinogenes) protein is Dissimilatory sulfite reductase MccA.